The following is a 314-amino-acid chain: Methionyl-tRNA formyltransferase (314 aa).

Residue 109 to 112 (SLLP) coordinates (6S)-5,6,7,8-tetrahydrofolate.

Belongs to the Fmt family.

It catalyses the reaction L-methionyl-tRNA(fMet) + (6R)-10-formyltetrahydrofolate = N-formyl-L-methionyl-tRNA(fMet) + (6S)-5,6,7,8-tetrahydrofolate + H(+). In terms of biological role, attaches a formyl group to the free amino group of methionyl-tRNA(fMet). The formyl group appears to play a dual role in the initiator identity of N-formylmethionyl-tRNA by promoting its recognition by IF2 and preventing the misappropriation of this tRNA by the elongation apparatus. The chain is Methionyl-tRNA formyltransferase from Alkaliphilus metalliredigens (strain QYMF).